Consider the following 62-residue polypeptide: MESRLLDILVCPVCKGRLEFQRAQAELVCNADRLAFPVRDGVPIMLEAEARSLDAEAPAQPS.

It belongs to the UPF0434 family.

This is UPF0434 protein BP2767 from Bordetella pertussis (strain Tohama I / ATCC BAA-589 / NCTC 13251).